Consider the following 218-residue polypeptide: MSDNDQLQQIAHLRREYTKGGLRRRDLPAEPLTLFERWLGQACDARLADPTAMVVATVDDKGQPYQRIVLLKHYDEKGLVFYTNLGSRKAHQIEHNPRISLLFPWHMLERQVMVTGKAERLSTLEVVRYFHSRPRDSQIGAWVSKQSSRISARGILESKFLELKQKFQQGEVPLPSFWGGFRVSIEQMEFWQGGEHRLHDRFLYQRDDGAWKIDRLAP.

Residues 14–17 (RREY) and Lys-72 each bind substrate. Residues 67 to 72 (RIVLLK), 82 to 83 (YT), Arg-88, Lys-89, and Gln-111 contribute to the FMN site. Tyr-129, Arg-133, and Ser-137 together coordinate substrate. FMN contacts are provided by residues 146-147 (QS) and Trp-191. Residue 197–199 (RLH) participates in substrate binding. Arg-201 serves as a coordination point for FMN.

Belongs to the pyridoxamine 5'-phosphate oxidase family. Homodimer. It depends on FMN as a cofactor.

The catalysed reaction is pyridoxamine 5'-phosphate + O2 + H2O = pyridoxal 5'-phosphate + H2O2 + NH4(+). The enzyme catalyses pyridoxine 5'-phosphate + O2 = pyridoxal 5'-phosphate + H2O2. The protein operates within cofactor metabolism; pyridoxal 5'-phosphate salvage; pyridoxal 5'-phosphate from pyridoxamine 5'-phosphate: step 1/1. It participates in cofactor metabolism; pyridoxal 5'-phosphate salvage; pyridoxal 5'-phosphate from pyridoxine 5'-phosphate: step 1/1. Its function is as follows. Catalyzes the oxidation of either pyridoxine 5'-phosphate (PNP) or pyridoxamine 5'-phosphate (PMP) into pyridoxal 5'-phosphate (PLP). The chain is Pyridoxine/pyridoxamine 5'-phosphate oxidase from Salmonella paratyphi B (strain ATCC BAA-1250 / SPB7).